We begin with the raw amino-acid sequence, 186 residues long: Ribosome maturation factor RimP (186 aa).

This sequence belongs to the RimP family.

It is found in the cytoplasm. Functionally, required for maturation of 30S ribosomal subunits. The chain is Ribosome maturation factor RimP from Novosphingobium aromaticivorans (strain ATCC 700278 / DSM 12444 / CCUG 56034 / CIP 105152 / NBRC 16084 / F199).